Here is a 113-residue protein sequence, read N- to C-terminus: Large ribosomal subunit protein bL19 (113 aa).

This sequence belongs to the bacterial ribosomal protein bL19 family.

Its function is as follows. This protein is located at the 30S-50S ribosomal subunit interface and may play a role in the structure and function of the aminoacyl-tRNA binding site. The polypeptide is Large ribosomal subunit protein bL19 (Rhodococcus erythropolis (strain PR4 / NBRC 100887)).